The chain runs to 132 residues: Large ribosomal subunit protein uL14 (132 aa).

It belongs to the universal ribosomal protein uL14 family. As to quaternary structure, part of the 50S ribosomal subunit. Forms a cluster with proteins L3 and L24e, part of which may contact the 16S rRNA in 2 intersubunit bridges.

Its function is as follows. Binds to 23S rRNA. Forms part of two intersubunit bridges in the 70S ribosome. This is Large ribosomal subunit protein uL14 from Methanocella arvoryzae (strain DSM 22066 / NBRC 105507 / MRE50).